We begin with the raw amino-acid sequence, 518 residues long: UNC5C-like protein (518 aa).

At 1–10 (MSPQESSVQP) the chain is on the extracellular side. Residues 11–31 (SQFLLLVGIPVASALLLAQCL) form a helical; Signal-anchor for type III membrane protein membrane-spanning segment. Topologically, residues 32–518 (RWHCCQWLPG…NHGLELDEKL (487 aa)) are cytoplasmic. Positions 102-237 (VFSAREVDHR…FSLYTCVLEA (136 aa)) constitute a ZU5 domain. Residues 186–400 (QQPSQACAYS…ETWAVPPPVS (215 aa)) form an interaction with RELA and NFKB1 region. The peptidase S68 stretch occupies residues 208-235 (PLGQPGTHISRDECRILLSHFSLYTCVL). Active-site residues include His-227 and Ser-229. Residues 415 to 494 (QLQMLLEPNS…SAIQNYLNRS (80 aa)) enclose the Death domain.

Belongs to the unc-5 family. In terms of assembly, interacts with p65/RELA and NFKB1.

It is found in the membrane. Its subcellular location is the cytoplasm. Inhibits NF-kappa-B-dependent transcription by impairing NF-kappa-B binding to its targets. This is UNC5C-like protein (Unc5cl) from Mus musculus (Mouse).